A 148-amino-acid chain; its full sequence is UPF0756 membrane protein ETA_17460 (148 aa).

Helical transmembrane passes span 14–34, 51–71, 80–100, and 112–132; these read ALSYFSHNITVTIALLVLIVI, MTVGIIILTIGVMAPIASGTI, FLHWKSLTAIAIGIFVSWLGG, and VVGGLLIGTIIGVSLFRGVPV.

The protein belongs to the UPF0756 family.

It localises to the cell membrane. The sequence is that of UPF0756 membrane protein ETA_17460 from Erwinia tasmaniensis (strain DSM 17950 / CFBP 7177 / CIP 109463 / NCPPB 4357 / Et1/99).